We begin with the raw amino-acid sequence, 151 residues long: Large ribosomal subunit protein bL9 (151 aa).

Belongs to the bacterial ribosomal protein bL9 family.

In terms of biological role, binds to the 23S rRNA. In Francisella philomiragia subsp. philomiragia (strain ATCC 25017 / CCUG 19701 / FSC 153 / O#319-036), this protein is Large ribosomal subunit protein bL9.